We begin with the raw amino-acid sequence, 410 residues long: Protein CNPPD1 (410 aa).

A helical transmembrane segment spans residues 233-253; the sequence is CLLAVAYVSSVALAVASVAVI.

It belongs to the CNPPD1 family.

Its subcellular location is the membrane. This is Protein CNPPD1 (CNPPD1) from Homo sapiens (Human).